The primary structure comprises 355 residues: Histidine biosynthesis bifunctional protein HisB (355 aa).

The segment at 1–166 (MKQKILFIDR…DITKEIIKRN (166 aa)) is histidinol-phosphatase. Catalysis depends on Asp9, which acts as the Nucleophile. Positions 9 and 11 each coordinate Mg(2+). The active-site Proton donor is the Asp11. Zn(2+) contacts are provided by Cys93, His95, Cys101, and Cys103. Residue Asp130 participates in Mg(2+) binding. The interval 167–355 (RYREVIRETK…NTLPTSKGIL (189 aa)) is imidazoleglycerol-phosphate dehydratase.

It in the N-terminal section; belongs to the histidinol-phosphatase family. In the C-terminal section; belongs to the imidazoleglycerol-phosphate dehydratase family. It depends on Mg(2+) as a cofactor. Requires Zn(2+) as cofactor.

It is found in the cytoplasm. It carries out the reaction D-erythro-1-(imidazol-4-yl)glycerol 3-phosphate = 3-(imidazol-4-yl)-2-oxopropyl phosphate + H2O. The catalysed reaction is L-histidinol phosphate + H2O = L-histidinol + phosphate. The protein operates within amino-acid biosynthesis; L-histidine biosynthesis; L-histidine from 5-phospho-alpha-D-ribose 1-diphosphate: step 6/9. It participates in amino-acid biosynthesis; L-histidine biosynthesis; L-histidine from 5-phospho-alpha-D-ribose 1-diphosphate: step 8/9. In Buchnera aphidicola subsp. Schizaphis graminum (strain Sg), this protein is Histidine biosynthesis bifunctional protein HisB.